A 104-amino-acid polypeptide reads, in one-letter code: MADYGSDKKSRDNQMRSAINQQLVETGEREKLKELLRVRLAECGWRDQLKQLCKEIVRERGLEHVSVDDLVQDITPKARQLVPDTVKKELLQKIRNFLAQQANV.

A compositionally biased stretch (basic and acidic residues) spans Met-1–Gln-14. A disordered region spans residues Met-1 to Gln-22.

Belongs to the ENY2 family. In terms of assembly, component of the nuclear pore complex (NPC)-associated TREX-2 complex (transcription and export complex 2). Component of the SAGA transcription coactivator-HAT complex. Within the SAGA complex, participates in a subcomplex of SAGA called the DUB module (deubiquitination module).

Its subcellular location is the nucleus. The protein resides in the nucleoplasm. Functionally, involved in mRNA export coupled transcription activation by association with both the TREX-2 and the SAGA complexes. The transcription regulatory histone acetylation (HAT) complex SAGA is a multiprotein complex that activates transcription by remodeling chromatin and mediating histone acetylation and deubiquitination. Within the SAGA complex, participates in a subcomplex that specifically deubiquitinates histones. The SAGA complex is recruited to specific gene promoters by activators, where it is required for transcription. The TREX-2 complex functions in docking export-competent ribonucleoprotein particles (mRNPs) to the nuclear entrance of the nuclear pore complex (nuclear basket). TREX-2 participates in mRNA export and accurate chromatin positioning in the nucleus by tethering genes to the nuclear periphery. The protein is Transcription and mRNA export factor ENY2 of Ciona intestinalis (Transparent sea squirt).